A 298-amino-acid polypeptide reads, in one-letter code: Homoserine kinase (298 aa).

83 to 93 contributes to the ATP binding site; that stretch reads PVSRGLGSSST.

Belongs to the GHMP kinase family. Homoserine kinase subfamily.

The protein localises to the cytoplasm. It catalyses the reaction L-homoserine + ATP = O-phospho-L-homoserine + ADP + H(+). Its pathway is amino-acid biosynthesis; L-threonine biosynthesis; L-threonine from L-aspartate: step 4/5. Its function is as follows. Catalyzes the ATP-dependent phosphorylation of L-homoserine to L-homoserine phosphate. This is Homoserine kinase from Clostridium beijerinckii (strain ATCC 51743 / NCIMB 8052) (Clostridium acetobutylicum).